A 227-amino-acid polypeptide reads, in one-letter code: Enolase-phosphatase E1 (227 aa).

The protein belongs to the HAD-like hydrolase superfamily. MasA/MtnC family. Monomer. The cofactor is Mg(2+).

It catalyses the reaction 5-methylsulfanyl-2,3-dioxopentyl phosphate + H2O = 1,2-dihydroxy-5-(methylsulfanyl)pent-1-en-3-one + phosphate. The protein operates within amino-acid biosynthesis; L-methionine biosynthesis via salvage pathway; L-methionine from S-methyl-5-thio-alpha-D-ribose 1-phosphate: step 3/6. Its pathway is amino-acid biosynthesis; L-methionine biosynthesis via salvage pathway; L-methionine from S-methyl-5-thio-alpha-D-ribose 1-phosphate: step 4/6. Its function is as follows. Bifunctional enzyme that catalyzes the enolization of 2,3-diketo-5-methylthiopentyl-1-phosphate (DK-MTP-1-P) into the intermediate 2-hydroxy-3-keto-5-methylthiopentenyl-1-phosphate (HK-MTPenyl-1-P), which is then dephosphorylated to form the acireductone 1,2-dihydroxy-3-keto-5-methylthiopentene (DHK-MTPene). The protein is Enolase-phosphatase E1 of Pseudomonas savastanoi pv. phaseolicola (strain 1448A / Race 6) (Pseudomonas syringae pv. phaseolicola (strain 1448A / Race 6)).